Consider the following 1470-residue polypeptide: Guanine nucleotide exchange factor subunit R06F6.8 (1470 aa).

WD repeat units lie at residues 20-58 (STAA…LLCS), 68-107 (ETRG…DEQC), and 472-512 (AYCS…VVGV). 4 disordered regions span residues 673 to 710 (QSQN…PMNQ), 975 to 1001 (FFRT…ADSS), 1017 to 1045 (RLNK…SKDK), and 1238 to 1259 (RSPS…SPSS). Residues 689 to 707 (SNVSIQSVSTSTTSEPSSP) are compositionally biased toward low complexity. Residues 983 to 1001 (AKTSLSRRPTVSSPSADSS) show a composition bias toward polar residues. Over residues 1028-1045 (EQKDAPRKDSIGGSSKDK) the composition is skewed to basic and acidic residues. Residues 1294–1314 (LLLSLFSQTATIDWIFLFCLL) traverse the membrane as a helical segment. Over residues 1385 to 1403 (SPDNENRKASQKTSADDPK) the composition is skewed to basic and acidic residues. Positions 1385–1447 (SPDNENRKAS…SADRAHKSVK (63 aa)) are disordered. Positions 1411-1424 (SGSSKLNNSFSNPK) are enriched in polar residues. Residues 1431–1447 (GRRERSRSADRAHKSVK) are compositionally biased toward basic and acidic residues.

This sequence belongs to the RIC1 family. As to quaternary structure, component of a guanine nucleotide exchange factor (GEF) complex.

It localises to the membrane. Probable component of a guanine nucleotide exchange factor (GEF) that may be required for efficient fusion of endosome-derived vesicles with the Golgi. The chain is Guanine nucleotide exchange factor subunit R06F6.8 from Caenorhabditis elegans.